A 364-amino-acid chain; its full sequence is MYLKEIFVDNFRNLKKQKLEFCEGVNLIYGLNAQGKSNLLEAIRLLSMGRSFRGSKMSELVKFDEEYFYVRGLVRSADFYEKKIEFGYKVNGNKVIKVNGNKLKSTGEILGHFLTVIFSPEDIEIIKEGPSRRRKYLDACISVIDKNYFFDLLQYNKTLSNRNSLLKKIKEEGKGEDLLEIFDEKLAEYGARIIKVRNNYLEKLKNSMSKFLMEISNEKLEIIYLNSAGVKEVHEENLIREKLKNRLTKSLTLDLKYLSTQVGPHREDFKILINGYDSRVYSSQGQKRTAALCLKLSELEILEEETGEKPVLLLDDVMSELDDNRKKYILKKLEGFQSFITHTSKSDVEGDCCFKIYDGIVMRE.

30-37 lines the ATP pocket; it reads GLNAQGKS.

It belongs to the RecF family.

Its subcellular location is the cytoplasm. Its function is as follows. The RecF protein is involved in DNA metabolism; it is required for DNA replication and normal SOS inducibility. RecF binds preferentially to single-stranded, linear DNA. It also seems to bind ATP. The protein is DNA replication and repair protein RecF of Caldanaerobacter subterraneus subsp. tengcongensis (strain DSM 15242 / JCM 11007 / NBRC 100824 / MB4) (Thermoanaerobacter tengcongensis).